Here is a 216-residue protein sequence, read N- to C-terminus: Phosducin-like protein 3 (216 aa).

Residues 13-59 (AKTIEQQLDQQLDRLDNLDSDDLKVLREQRLREMKDLNNKKQEWLRN) adopt a coiled-coil conformation. In terms of domain architecture, Phosducin spans 29 to 163 (NLDSDDLKVL…DLGNCDDFAT (135 aa)).

This sequence belongs to the phosducin family. Highly expressed in germline cells of the testis from the spermatogonia stage until the early spermatid stage but is no longer observed in late-stage spermatids in the distal end of the testis.

It carries out the reaction [thioredoxin]-dithiol + NADP(+) = [thioredoxin]-disulfide + NADPH + H(+). Functionally, has redox activity with thioredoxin. Required for male fertility and maturation of sperm past the canoe stage during spermiogenesis. This Drosophila melanogaster (Fruit fly) protein is Phosducin-like protein 3.